Consider the following 635-residue polypeptide: MIQVTCDQKNYEVLEGTTAAELAKQLKNSHQFIGVLINERPRDLSTHLNEGDTLVFLTSEDPEGREIFLHTSAHLLAQAVLRLWPDAIPTIGPVIDHGFYYDFANLSISESDFPLIEDTVKQIVDEKLAISRFTYGDKQQALAQFPQNPFKTELIRELPENEEISAYSQGEFFDLCRGPHLPSTAHVKAFKVLRTSAAYWRGDPSRESLVRIYGTSFPTSKELRAHLEQIEEAKKRDHRVLGAKLDLFSQQESSPGMPFFHPRGMIVWDALIRYWKQLHTAAGYKEILTPQLMNRQLWEVSGHWDNYKANMYTLQIDDEDYAIKPMNCPGCMLYYKTRLHSYKEFPLRVAEVGHVHRQEASGALSGLMRVRAFHQDDAHVFLTPEQVEEETLNILQLVSTLYGTFGLEYHLELSTRPEKDTIGDDSLWELATDALNRALVQSGTPFIVRPGEGAFYGPKIDIHVKDAIQRTWQCGTIQLDMFLPERFELEYTTAQGTKSVPVMLHRALFGSIERFLGILIENFKGRFPLWLSPEQVRIITVADRHIPRAKELEEAWKRLGLVVTLDDSSESVSKKIRNAQNMQVNYMITLGDHEINENVLAVRTRDNRVINDVSVERFLNTILEEKNSLSLTALL.

In terms of domain architecture, TGS spans 1 to 58; the sequence is MIQVTCDQKNYEVLEGTTAAELAKQLKNSHQFIGVLINERPRDLSTHLNEGDTLVFLT. Positions 237–528 are catalytic; it reads DHRVLGAKLD…LIENFKGRFP (292 aa). Residues cysteine 328, histidine 379, and histidine 505 each contribute to the Zn(2+) site.

This sequence belongs to the class-II aminoacyl-tRNA synthetase family. In terms of assembly, homodimer. Zn(2+) is required as a cofactor.

The protein resides in the cytoplasm. It carries out the reaction tRNA(Thr) + L-threonine + ATP = L-threonyl-tRNA(Thr) + AMP + diphosphate + H(+). Its function is as follows. Catalyzes the attachment of threonine to tRNA(Thr) in a two-step reaction: L-threonine is first activated by ATP to form Thr-AMP and then transferred to the acceptor end of tRNA(Thr). Also edits incorrectly charged L-seryl-tRNA(Thr). The sequence is that of Threonine--tRNA ligase from Chlamydia pneumoniae (Chlamydophila pneumoniae).